The following is a 92-amino-acid chain: YcgL domain-containing protein VC_1957 (92 aa).

Positions 1-84 constitute a YcgL domain; the sequence is MLCSIYKSPK…PPENLLEQHK (84 aa). Residues 69-92 are disordered; it reads FLQLPPPPENLLEQHKERKARQTP.

This Vibrio cholerae serotype O1 (strain ATCC 39315 / El Tor Inaba N16961) protein is YcgL domain-containing protein VC_1957.